The following is a 547-amino-acid chain: Apolipoprotein N-acyltransferase (547 aa).

The next 5 helical transmembrane spans lie at 31-51, 71-91, 106-126, 180-200, and 210-230; these read ILSG…ALIF, FWAG…WIAY, LALL…VAAG, LVGF…MGYV, and ALSH…WGFW. Positions 247–515 constitute a CN hydrolase domain; that stretch reads VQANIGNLEK…KYLKNAPLTF (269 aa). E294 (proton acceptor) is an active-site residue. K364 is a catalytic residue. C418 (nucleophile) is an active-site residue. The helical transmembrane segment at 515–535 threads the bilayer; it reads FFVQWGHWDWIVILLVLGAVI.

This sequence belongs to the CN hydrolase family. Apolipoprotein N-acyltransferase subfamily.

The protein resides in the cell inner membrane. The catalysed reaction is N-terminal S-1,2-diacyl-sn-glyceryl-L-cysteinyl-[lipoprotein] + a glycerophospholipid = N-acyl-S-1,2-diacyl-sn-glyceryl-L-cysteinyl-[lipoprotein] + a 2-acyl-sn-glycero-3-phospholipid + H(+). The protein operates within protein modification; lipoprotein biosynthesis (N-acyl transfer). Its function is as follows. Catalyzes the phospholipid dependent N-acylation of the N-terminal cysteine of apolipoprotein, the last step in lipoprotein maturation. The sequence is that of Apolipoprotein N-acyltransferase from Bdellovibrio bacteriovorus (strain ATCC 15356 / DSM 50701 / NCIMB 9529 / HD100).